The following is a 234-amino-acid chain: Transcriptional regulatory protein WalR (234 aa).

The 114-residue stretch at 3–116 folds into the Response regulatory domain; it reads KILIVDDEKP…ELQARVKALL (114 aa). At Asp-52 the chain carries 4-aspartylphosphate. Positions 133 to 232 form a DNA-binding region, ompR/PhoB-type; sequence PQPIQIGDLE…RRGVGYYMRN (100 aa).

In terms of assembly, monomer. Homodimer. Phosphorylated by WalK; can also be dephosphorylated by WalK.

Its subcellular location is the cytoplasm. Its function is as follows. Member of the two-component regulatory system WalK/WalR that regulates genes involved in cell wall metabolism. Binds to the promoter region of the transcription factor fabT gene in the fabTH-acp operon in vitro. Inhibits transcription of fabT, probably acting in an unphosphorylated form, thereby playing a role in the regulation of fatty acid biosynthesis. Essential for normal growth in vitro. Required for maintaining normal cellular morphology, acting, at least in part, by regulating peptidoglycan hydrolase pcsB. Involved in maintaining expression of WalRK regulon genes in exponentially growing cells. The polypeptide is Transcriptional regulatory protein WalR (Streptococcus pneumoniae serotype 2 (strain D39 / NCTC 7466)).